We begin with the raw amino-acid sequence, 434 residues long: Beta-enolase (434 aa).

Ala2 carries the post-translational modification N-acetylalanine. The residue at position 72 (Thr72) is a Phosphothreonine. Phosphoserine occurs at positions 83 and 157. Substrate-binding residues include His158 and Glu167. Phosphoserine is present on Ser176. Thr205 carries the phosphothreonine modification. Catalysis depends on Glu210, which acts as the Proton donor. Position 229 is a phosphothreonine (Thr229). Tyr236 carries the post-translational modification Phosphotyrosine. Asp245 contributes to the Mg(2+) binding site. A Phosphoserine modification is found at Ser263. Substrate-binding residues include Glu293 and Asp318. Residues Glu293 and Asp318 each coordinate Mg(2+). Catalysis depends on Lys343, which acts as the Proton acceptor. Substrate contacts are provided by residues 370-373 (SHRS) and Lys394.

This sequence belongs to the enolase family. Mammalian enolase is composed of 3 isozyme subunits, alpha, beta and gamma, which can form homodimers or heterodimers which are cell-type and development-specific. Interacts with PNKD. It depends on Mg(2+) as a cofactor.

It is found in the cytoplasm. The enzyme catalyses (2R)-2-phosphoglycerate = phosphoenolpyruvate + H2O. The protein operates within carbohydrate degradation; glycolysis; pyruvate from D-glyceraldehyde 3-phosphate: step 4/5. Functionally, glycolytic enzyme that catalyzes the conversion of 2-phosphoglycerate to phosphoenolpyruvate. Appears to have a function in striated muscle development and regeneration. The polypeptide is Beta-enolase (ENO3) (Sus scrofa (Pig)).